Reading from the N-terminus, the 73-residue chain is MDGKAPAAYVDPAEFNEVMKRLEKIDEKVEFVNSEVAQRIGKKVGRDIGILYGAVVGLLLFLIYVSVSSMFTI.

Residues 48-68 form a helical membrane-spanning segment; the sequence is IGILYGAVVGLLLFLIYVSVS.

Belongs to the MtrG family. The complex is composed of 8 subunits; MtrA, MtrB, MtrC, MtrD, MtrE, MtrF, MtrG and MtrH.

The protein localises to the cell membrane. The enzyme catalyses 5-methyl-5,6,7,8-tetrahydromethanopterin + coenzyme M + 2 Na(+)(in) = 5,6,7,8-tetrahydromethanopterin + methyl-coenzyme M + 2 Na(+)(out). It functions in the pathway one-carbon metabolism; methanogenesis from CO(2); methyl-coenzyme M from 5,10-methylene-5,6,7,8-tetrahydromethanopterin: step 2/2. Functionally, part of a complex that catalyzes the formation of methyl-coenzyme M and tetrahydromethanopterin from coenzyme M and methyl-tetrahydromethanopterin. This is an energy-conserving, sodium-ion translocating step. The polypeptide is Tetrahydromethanopterin S-methyltransferase subunit G (Methanosarcina acetivorans (strain ATCC 35395 / DSM 2834 / JCM 12185 / C2A)).